The sequence spans 596 residues: Phosphoenolpyruvate carboxykinase [GTP] (596 aa).

Residues Arg77 and 205 to 207 (YGG) each bind substrate. Lys214 and His234 together coordinate Mn(2+). Residue Ser256 participates in substrate binding. 257–262 (ACGKTN) serves as a coordination point for GTP. Residue Cys258 is part of the active site. Asp283 serves as a coordination point for Mn(2+). The segment at 362–388 (KKGSTEKAAHPNSRFTAPAKNNPAISP) is disordered. Position 373–375 (373–375 (NSR)) interacts with substrate. GTP-binding positions include Arg375, Arg406, and 499-502 (YGDN).

It belongs to the phosphoenolpyruvate carboxykinase [GTP] family. As to quaternary structure, monomer. It depends on Mn(2+) as a cofactor.

Its subcellular location is the cytoplasm. It carries out the reaction oxaloacetate + GTP = phosphoenolpyruvate + GDP + CO2. Its pathway is carbohydrate biosynthesis; gluconeogenesis. Its function is as follows. Catalyzes the conversion of oxaloacetate (OAA) to phosphoenolpyruvate (PEP), the rate-limiting step in the metabolic pathway that produces glucose from lactate and other precursors derived from the citric acid cycle. This Anaeromyxobacter sp. (strain K) protein is Phosphoenolpyruvate carboxykinase [GTP].